Consider the following 161-residue polypeptide: Large ribosomal subunit protein uL16 (161 aa).

The interval 140–161 is disordered; it reads LNKGNYKPAKTPVTADDSESSS.

It belongs to the universal ribosomal protein uL16 family. In terms of assembly, part of the 50S ribosomal subunit.

Its function is as follows. Binds 23S rRNA and is also seen to make contacts with the A and possibly P site tRNAs. In Prochlorococcus marinus (strain NATL1A), this protein is Large ribosomal subunit protein uL16.